The primary structure comprises 1396 residues: DNA ligase 6 (1396 aa).

2 disordered regions span residues 441-464 (KNAC…DTTP) and 562-599 (MNLT…GPGQ). 2 short sequence motifs (nuclear localization signal) span residues 572-579 (GKRGKSSG) and 886-893 (LRKISVQT). Glu-1037 is a binding site for ATP. Lys-1039 serves as the catalytic N6-AMP-lysine intermediate. ATP is bound by residues Arg-1044, Arg-1060, Glu-1092, and Phe-1136. Glu-1092 serves as a coordination point for Mg(2+). Position 1207 (Glu-1207) interacts with Mg(2+). ATP contacts are provided by Lys-1212, Arg-1225, and Lys-1231.

The protein belongs to the ATP-dependent DNA ligase family. Requires Mg(2+) as cofactor. In terms of tissue distribution, mostly expressed in buds and flowers, and, to a lower extent, in stems, leaves, siliques and seeds.

Its subcellular location is the nucleus. The enzyme catalyses ATP + (deoxyribonucleotide)n-3'-hydroxyl + 5'-phospho-(deoxyribonucleotide)m = (deoxyribonucleotide)n+m + AMP + diphosphate.. In terms of biological role, DNA ligase that seals nicks in double-stranded DNA during DNA replication, DNA recombination and DNA repair. Required to maintain seed viability (e.g. longevity and storability) and during seed germination, probably by repairing DNA damage accumulated during seed development, storage and/or imbibition. Facilitates seed germination in cold conditions (2 degrees Celsius) and under oxidative stress (e.g. menadione, a genotoxic agent). Involved in repair of X-ray-induced damage. Its function is as follows. Limits stable root transformation by A.tumefaciens T-DNA. This chain is DNA ligase 6, found in Arabidopsis thaliana (Mouse-ear cress).